Reading from the N-terminus, the 632-residue chain is MSKFTWKELIQLGSPSKAYESSLACIAHIDMNAFFAQVEQMRCGLSKEDPVVCVQWNSIIAVSYAARKYGISRMDTIQEALKKCSNLIPIHTAVFKKGEDFWQYHDGCGSWVQDPAKQISVEDHKVSLEPYRRESRKALKIFKSACDLVERASIDEVFLDLGRICFNMLMFDNEYELTGDLKLKDALSNIREAFIGGNYDINSHLPLIPEKIKSLKFEGDVFNPEGRDLITDWDDVILALGSQVCKGIRDSIKDILGYTTSCGLSSTKNVCKLASNYKKPDAQTIVKNDCLLDFLDCGKFEITSFWTLGGVLGKELIDVLDLPHENSIKHIRETWPDNAGQLKEFLDAKVKQSDYDRSTSNIDPLKTADLAEKLFKLSRGRYGLPLSSRPVVKSMMSNKNLRGKSCNSIVDCISWLEVFCAELTSRIQDLEQEYNKIVIPRTVSISLKTKSYEVYRKSGPVAYKGINFQSHELLKVGIKFVTDLDIKGKNKSYYPLTKLSMTITNFDIIDLQKTVVDMFGNQVHTFKSSAGKEDEEKTTSSKADEKTPKLECCKYQVTFTDQKALQEHADYHLALKLSEGLNGAEESSKNLSFGEKRLLFSRKRPNSQHTATPQKKQVTSSKNILSFFTRKK.

A UmuC domain is found at 26–309 (IAHIDMNAFF…FEITSFWTLG (284 aa)). Residues Asp30 and Asp155 each coordinate Mg(2+). The UBZ3-type zinc-finger motif lies at 545 to 580 (EKTPKLECCKYQVTFTDQKALQEHADYHLALKLSEG). 4 residues coordinate Zn(2+): Cys552, Cys553, His568, and His572. The segment at 598–632 (LLFSRKRPNSQHTATPQKKQVTSSKNILSFFTRKK) is disordered. Polar residues predominate over residues 607-626 (SQHTATPQKKQVTSSKNILS). The tract at residues 625 to 632 (LSFFTRKK) is POL30-binding.

Belongs to the DNA polymerase type-Y family. As to quaternary structure, interacts with POL30. This interaction is essential for the polymerase eta function.

The protein localises to the nucleus. It carries out the reaction DNA(n) + a 2'-deoxyribonucleoside 5'-triphosphate = DNA(n+1) + diphosphate. DNA polymerase specifically involved in DNA repair. Plays an important role in translesion synthesis, where the normal high fidelity DNA polymerases cannot proceed and DNA synthesis stalls. Plays an important role in the repair of UV-induced pyrimidine dimers. Depending on the context, it inserts the correct base, but causes frequent base transitions and transversions. Efficiently incorporates nucleotides opposite to other UV or oxidative DNA damages like O(6)-methylguanine, 7,8-dihydro-8-oxoguanine, 2,6-diamino-4-hydroxy-5-formamidopyrimidine of 2'-deoxyguanosine (FaPydG), or p-benzoquinone DNA adducts. In Saccharomyces cerevisiae (strain ATCC 204508 / S288c) (Baker's yeast), this protein is DNA polymerase eta (RAD30).